The sequence spans 154 residues: Myoglobin (154 aa).

Positions 2-148 (VLSDGEWQLV…FRKDIAAKYK (147 aa)) constitute a Globin domain. Serine 4 is subject to Phosphoserine. A nitrite-binding site is contributed by histidine 65. An O2-binding site is contributed by histidine 65. Threonine 68 is modified (phosphothreonine). Residue histidine 94 participates in heme b binding.

Belongs to the globin family. As to quaternary structure, monomeric.

It localises to the cytoplasm. The protein localises to the sarcoplasm. It carries out the reaction Fe(III)-heme b-[protein] + nitric oxide + H2O = Fe(II)-heme b-[protein] + nitrite + 2 H(+). The enzyme catalyses H2O2 + AH2 = A + 2 H2O. Monomeric heme protein which primary function is to store oxygen and facilitate its diffusion within muscle tissues. Reversibly binds oxygen through a pentacoordinated heme iron and enables its timely and efficient release as needed during periods of heightened demand. Depending on the oxidative conditions of tissues and cells, and in addition to its ability to bind oxygen, it also has a nitrite reductase activity whereby it regulates the production of bioactive nitric oxide. Under stress conditions, like hypoxia and anoxia, it also protects cells against reactive oxygen species thanks to its pseudoperoxidase activity. This chain is Myoglobin, found in Balaena mysticetus (Bowhead whale).